Reading from the N-terminus, the 129-residue chain is Small ribosomal subunit protein bS16m (129 aa).

This sequence belongs to the bacterial ribosomal protein bS16 family. Component of the mitochondrial ribosome small subunit (28S) which comprises a 12S rRNA and about 30 distinct proteins.

Its subcellular location is the mitochondrion. In Drosophila melanogaster (Fruit fly), this protein is Small ribosomal subunit protein bS16m (mRpS16).